Consider the following 419-residue polypeptide: Gamma-glutamyl phosphate reductase (419 aa).

This sequence belongs to the gamma-glutamyl phosphate reductase family.

Its subcellular location is the cytoplasm. It carries out the reaction L-glutamate 5-semialdehyde + phosphate + NADP(+) = L-glutamyl 5-phosphate + NADPH + H(+). It functions in the pathway amino-acid biosynthesis; L-proline biosynthesis; L-glutamate 5-semialdehyde from L-glutamate: step 2/2. Catalyzes the NADPH-dependent reduction of L-glutamate 5-phosphate into L-glutamate 5-semialdehyde and phosphate. The product spontaneously undergoes cyclization to form 1-pyrroline-5-carboxylate. This Syntrophomonas wolfei subsp. wolfei (strain DSM 2245B / Goettingen) protein is Gamma-glutamyl phosphate reductase.